A 136-amino-acid chain; its full sequence is Large ribosomal subunit protein bL20 (136 aa).

Belongs to the bacterial ribosomal protein bL20 family.

Functionally, binds directly to 23S ribosomal RNA and is necessary for the in vitro assembly process of the 50S ribosomal subunit. It is not involved in the protein synthesizing functions of that subunit. The protein is Large ribosomal subunit protein bL20 of Tropheryma whipplei (strain Twist) (Whipple's bacillus).